The sequence spans 102 residues: Monothiol glutaredoxin-S10 (102 aa).

One can recognise a Glutaredoxin domain in the interval 1-101 (MDVVARLASQ…ILLKEAGALW (101 aa)). Cysteine 21 is a [2Fe-2S] cluster binding site. Positions 99-102 (ALWL) match the Responsive for interaction with TGA factors motif.

It belongs to the glutaredoxin family. CC-type subfamily.

The protein localises to the cytoplasm. Its subcellular location is the nucleus. May only reduce GSH-thiol disulfides, but not protein disulfides. The sequence is that of Monothiol glutaredoxin-S10 (GRXS10) from Arabidopsis thaliana (Mouse-ear cress).